Consider the following 298-residue polypeptide: O-glycoside alpha-1,2-mannosyltransferase homolog 6 (298 aa).

The Nucleophile role is filled by Glu220.

The protein belongs to the glycosyltransferase 15 family.

Its subcellular location is the cytoplasm. The protein resides in the nucleus. Probable mannosyltransferase involved in O-glycosylation of cell wall and secreted proteins. This chain is O-glycoside alpha-1,2-mannosyltransferase homolog 6 (omh6), found in Schizosaccharomyces pombe (strain 972 / ATCC 24843) (Fission yeast).